The chain runs to 615 residues: Probable transporter mch1 (615 aa).

Residues 1 to 35 form a disordered region; it reads MTGSIGQAPAIDKRDFDINRRSSTPHETAAQEDEA. Residues 11 to 20 show a composition bias toward basic and acidic residues; sequence IDKRDFDINR. A helical membrane pass occupies residues 84-104; that stretch reads FVWGVITCLGAGSITAFSLYG. Asn-112 carries N-linked (GlcNAc...) asparagine glycosylation. 5 helical membrane passes run 120-140, 147-167, 182-202, 218-238, and 261-281; these read EVSIAAGISMYLPVSLAGYLC, PLTLFAGIAFGLGYSLAAFVY, FWVMVVAFIAIGVATCSMYLA, GIILAVPIAAFGLSGMWQSQV, and FLFLAILLLTIGVIGTFALRI. Residue Asn-329 is glycosylated (N-linked (GlcNAc...) asparagine). A run of 6 helical transmembrane segments spans residues 371–391, 428–448, 477–497, 512–532, 538–558, and 583–603; these read IFLADHTMWWLALGFFLVTGP, IIALTSTIARLLTGSLSDLFA, LAFLIPSALLLSLGFLLLASP, LVGLGYGSIFSLVPIIISVVW, GTNWGIVAMFPAAGAAMWGVI, and FGFWSIGCTFSVWVAIVAWLV.

Belongs to the major facilitator superfamily.

The protein resides in the vacuole membrane. Functionally, probable transporter. The protein is Probable transporter mch1 (mch1) of Emericella nidulans (strain FGSC A4 / ATCC 38163 / CBS 112.46 / NRRL 194 / M139) (Aspergillus nidulans).